The chain runs to 210 residues: Vacuolar protein sorting-associated protein 28 homolog 2 (210 aa).

The VPS28 N-terminal domain occupies 1 to 99 (MMEVKLWNDK…VTSGLPATVE (99 aa)). Residues 109–205 (SNSASIVAEC…SSYNSFMAAL (97 aa)) enclose the VPS28 C-terminal domain.

Belongs to the VPS28 family. Component of the endosomal sorting required for transport complex I (ESCRT-I), composed of ELC, VPS28 and VPS37. Interacts with ELC.

It localises to the endosome. Component of the ESCRT-I complex (endosomal sorting complex required for transport I), a regulator of vesicular trafficking process. Required for the sorting of endocytic ubiquitinated cargos into multivesicular bodies (MVBs). Mediates the association to the ESCRT-0 complex. The polypeptide is Vacuolar protein sorting-associated protein 28 homolog 2 (VPS28-2) (Arabidopsis thaliana (Mouse-ear cress)).